Consider the following 358-residue polypeptide: MGEKGCESCREWQEHCYREHMDVSRIRFFRLMTGDFAHGISIPEKVADRFSGQITKGFNLKAPSGETWRVSVEKVADELILMSGWEDFAKAHELQENDLLFFTCNGRCNGSFSFDVLIFDASGCEKVSCFFIGKKNSIGGQTQNAEQYHLSDSEDTSTPSTFLVGSPHKASTSKKLNGKTKTNPRKEPEDPNSSRSHVKHEMIEEEKSDDDDEHADYEHADYYYSRFANYLTGEEREEIFSLVSLQPGNPVFVTVLQAPQIHRKGLLIVPSGFAADHLDSRSQEILLMRPNKKEKWYVKYYHASTTRGFNCQRWIKFIRENRLREGYICIFELMKGARRVTMTVHVIGKVDDRFVLLG.

Positions 25-122 (RIRFFRLMTG…SFDVLIFDAS (98 aa)) form a DNA-binding region, TF-B3 1. Residues 148–215 (YHLSDSEDTS…EKSDDDDEHA (68 aa)) are disordered. Residues 156 to 181 (TSTPSTFLVGSPHKASTSKKLNGKTK) are compositionally biased toward polar residues. Residues 203–215 (IEEEKSDDDDEHA) show a composition bias toward acidic residues. The TF-B3 2 DNA-binding region spans 252–350 (FVTVLQAPQI…TMTVHVIGKV (99 aa)).

The protein resides in the nucleus. The sequence is that of B3 domain-containing protein Os12g0592300 from Oryza sativa subsp. japonica (Rice).